We begin with the raw amino-acid sequence, 248 residues long: tRNA (guanine-N(1)-)-methyltransferase (248 aa).

S-adenosyl-L-methionine-binding positions include glycine 113 and 133–138 (IGDYVL).

Belongs to the RNA methyltransferase TrmD family. In terms of assembly, homodimer.

It is found in the cytoplasm. It carries out the reaction guanosine(37) in tRNA + S-adenosyl-L-methionine = N(1)-methylguanosine(37) in tRNA + S-adenosyl-L-homocysteine + H(+). Functionally, specifically methylates guanosine-37 in various tRNAs. The protein is tRNA (guanine-N(1)-)-methyltransferase of Shewanella frigidimarina (strain NCIMB 400).